We begin with the raw amino-acid sequence, 304 residues long: Putative F-box/LRR-repeat protein 21 (304 aa).

In terms of domain architecture, F-box spans 43–90 (RRNWVDLPPELTTSILLRLSLTDILDNAQKVCKEWRRICKDPSMWRKI). LRR repeat units lie at residues 132–159 (LSYITDRNLRSLGLGMCFPRVTKLGVVN), 173–198 (THSCIKLDLKAIGHACPQLKTLKLNS), 218–241 (GPLECDDDALAIAESMPKLHHLQL), and 243–268 (ANRLTNTGLNAILDGCPHLEHLDVRK).

This chain is Putative F-box/LRR-repeat protein 21 (FBL21), found in Arabidopsis thaliana (Mouse-ear cress).